Here is a 439-residue protein sequence, read N- to C-terminus: Kelch domain-containing protein 10 (439 aa).

Residues 1–50 (MSAAQGWDRNRRRGGGAAGGASGVSGAGAAGGGRGTGQLNRFVQLSGRPH) are disordered. Arg-13 is modified (omega-N-methylarginine). Gly residues predominate over residues 15–36 (GGAAGGASGVSGAGAAGGGRGT). 6 Kelch repeats span residues 87 to 154 (PARS…LASM), 155 to 198 (SLVL…SCRG), 199 to 260 (KRPS…RYRH), 261 to 319 (EIAH…HSCV), 320 to 364 (QIKN…VYFH), and 365 to 403 (CAAVTPAGCMYIHGGVVNIHENKRTGSLFKIWLVVPSLL). The tract at residues 398 to 439 (VVPSLLELAWEKLLAAFPNLANLSRTQLLHLGLTQELIERLK) is interaction with CUL2.

The protein belongs to the KLHDC10 family. In terms of assembly, component of a CRL2 E3 ubiquitin-protein ligase complex, also named ECS (Elongin BC-CUL2/5-SOCS-box protein) complex, composed of CUL2, Elongin BC (ELOB and ELOC), RBX1 and substrate-specific adapter KLHDC10. Interacts (via the 6 Kelch repeats) with PPP5C.

Its subcellular location is the nucleus. The protein localises to the cytoplasm. Its pathway is protein modification; protein ubiquitination. Its function is as follows. Substrate-recognition component of a Cul2-RING (CRL2) E3 ubiquitin-protein ligase complex of the DesCEND (destruction via C-end degrons) pathway, which recognizes a C-degron located at the extreme C-terminus of target proteins, leading to their ubiquitination and degradation. The C-degron recognized by the DesCEND pathway is usually a motif of less than ten residues and can be present in full-length proteins, truncated proteins or proteolytically cleaved forms. The CRL2(KLHDC10) complex specifically recognizes proteins with a proline-glycine (Pro-Gly) or an alanine tail (CAT tail) at the C-terminus, leading to their ubiquitination and degradation. The CRL2(KLHDC10) complex is involved in the ribosome-associated quality control (RQC) pathway, which mediates the extraction of incompletely synthesized nascent chains from stalled ribosomes: CRL2(KLHDC10) acts downstream of NEMF and recognizes CAT tails associated with stalled nascent chains, leading to their ubiquitination and degradation. Participates in the oxidative stress-induced cell death through MAP3K5 activation. Inhibits PPP5C phosphatase activity on MAP3K5. Acts as a regulator of necroptosis. This chain is Kelch domain-containing protein 10, found in Mus musculus (Mouse).